We begin with the raw amino-acid sequence, 442 residues long: MSKTLYQKIYDSHIVYEDKKNISVLYIDLHLIHEVTSPQAFDSLRNKKRKVRQPEKTFATMDHNVSTQKRDINASGSMAKKQMQQLIRNCDEFNISLYDINNPNQGIVHVIAPEKGMTLPGMIIVCGDSHTSTHGAFGALSFGIGTSEVEHVLATQTLKQQCFKNMKVEIVGDIPKFVTAKDIILFIIRRLGSSGGSGYVIEFCGNVIEKMSMEERMTVCNMAIEMGAKSGIIAPDETTYAYLKNKIYSPSGACWEXSISYWKTLKSDKDAFFDKCFTIDISNLAPQVTWGTSPDQVISINEKIPHYNEFNSITQKNSAKSALKYMGLNEGAYLTNISIDKVFIGSCTNARIEDLRSASKILKNRKISSNVKAIVVPGSGSVKQQAEREGLDKIFINSGFEWRLPGCSMCLGMNRDQLNIGERCASXSNRNFEGRQGRGGRT.

[4Fe-4S] cluster-binding residues include Cys-347, Cys-407, and Cys-410.

The protein belongs to the aconitase/IPM isomerase family. LeuC type 1 subfamily. Heterodimer of LeuC and LeuD. [4Fe-4S] cluster serves as cofactor.

It carries out the reaction (2R,3S)-3-isopropylmalate = (2S)-2-isopropylmalate. Its pathway is amino-acid biosynthesis; L-leucine biosynthesis; L-leucine from 3-methyl-2-oxobutanoate: step 2/4. Catalyzes the isomerization between 2-isopropylmalate and 3-isopropylmalate, via the formation of 2-isopropylmaleate. The polypeptide is 3-isopropylmalate dehydratase large subunit (Buchnera aphidicola subsp. Uroleucon helianthicola).